A 236-amino-acid chain; its full sequence is H2HPP isomerase (236 aa).

Cupin type-2 domains follow at residues 40 to 106 (YVPP…AIDI) and 151 to 215 (NIPG…SKSV). Residues His-50, His-52, Gln-56, His-91, His-162, His-164, Gln-168, and His-202 each contribute to the a divalent metal cation site. Tyr-223 lines the substrate pocket.

As to quaternary structure, monomer. Fe(2+) is required as a cofactor. The cofactor is Co(2+).

It is found in the cytoplasm. The enzyme catalyses 3-[(4R)-4-hydroxycyclohexa-1,5-dien-1-yl]-2-oxopropanoate = 3-[(1E,4R)-4-hydroxycyclohex-2-en-1-ylidene]pyruvate. It participates in antibiotic biosynthesis; bacilysin biosynthesis. Functionally, part of the bacABCDEF operon responsible for the biosynthesis of the nonribosomally synthesized dipeptide antibiotic bacilysin, composed of L-alanine and L-anticapsin. Bacilysin is an irreversible inactivator of the glutaminase domain of glucosamine synthetase. BacB catalyzes the allylic isomerization of the endocyclic-delta(4),delta(8)-7R-dihydro-hydroxyphenylpyruvate (en-H2HPP) to generate a mixture of 3E,7R- and 3Z, 7R-olefins of the exocyclic-delta(3),delta(5)-dihydro-hydroxyphenylpyruvate (ex-H2HPP). The protein is H2HPP isomerase of Bacillus amyloliquefaciens (Bacillus velezensis).